The sequence spans 117 residues: Ig heavy chain V region 5-76 (117 aa).

The first 19 residues, 1-19, serve as a signal peptide directing secretion; the sequence is MNFVLSLIFLALILKGVQC. Positions 20–49 are framework-1; sequence EVHLVESGGGLVKPGGSLKLSCVVSGFTFN. The cysteines at positions 41 and 115 are disulfide-linked. Residues 50–54 are complementarity-determining-1; the sequence is KYAMS. Residues 55 to 68 form a framework-2 region; it reads WVRQTPEKRLEWVA. The complementarity-determining-2 stretch occupies residues 69 to 85; the sequence is TISSGGLYTYYPDSVKG. A framework-3 region spans residues 86-117; that stretch reads RFTISRDNAGNTLYLQMSSLRSEDTAMYYCAR.

The protein is Ig heavy chain V region 5-76 of Mus musculus (Mouse).